A 315-amino-acid polypeptide reads, in one-letter code: Methionyl-tRNA formyltransferase (315 aa).

113–116 provides a ligand contact to (6S)-5,6,7,8-tetrahydrofolate; it reads SILP.

It belongs to the Fmt family.

It catalyses the reaction L-methionyl-tRNA(fMet) + (6R)-10-formyltetrahydrofolate = N-formyl-L-methionyl-tRNA(fMet) + (6S)-5,6,7,8-tetrahydrofolate + H(+). Attaches a formyl group to the free amino group of methionyl-tRNA(fMet). The formyl group appears to play a dual role in the initiator identity of N-formylmethionyl-tRNA by promoting its recognition by IF2 and preventing the misappropriation of this tRNA by the elongation apparatus. This chain is Methionyl-tRNA formyltransferase, found in Vibrio vulnificus (strain YJ016).